Consider the following 360-residue polypeptide: Phospho-N-acetylmuramoyl-pentapeptide-transferase (360 aa).

Transmembrane regions (helical) follow at residues 25-45 (RGILGVLTALSLALWLGPWMI), 73-93 (TMGGALILSAIAISTLLWADL), 97-117 (YVWVVLIVTLAFGAIGWVDDY), 134-154 (YFWQSVFGLAAAIFLYKTAPT), 168-188 (LAIPLGAGFIVLTYFVIVGSS), 199-219 (GLAIMPTVMVGGALGIFCYLS), 236-256 (AGELIVFCGALIGAGLGFLWF), 263-283 (VFMGDVGALALGAALGTIAVI), 288-308 (VVLFIMGGVFVMETLSVVIQV), and 338-358 (VIVRFWIITVILVLIGLATLK).

It belongs to the glycosyltransferase 4 family. MraY subfamily. Requires Mg(2+) as cofactor.

The protein resides in the cell inner membrane. It carries out the reaction UDP-N-acetyl-alpha-D-muramoyl-L-alanyl-gamma-D-glutamyl-meso-2,6-diaminopimeloyl-D-alanyl-D-alanine + di-trans,octa-cis-undecaprenyl phosphate = di-trans,octa-cis-undecaprenyl diphospho-N-acetyl-alpha-D-muramoyl-L-alanyl-D-glutamyl-meso-2,6-diaminopimeloyl-D-alanyl-D-alanine + UMP. Its pathway is cell wall biogenesis; peptidoglycan biosynthesis. In terms of biological role, catalyzes the initial step of the lipid cycle reactions in the biosynthesis of the cell wall peptidoglycan: transfers peptidoglycan precursor phospho-MurNAc-pentapeptide from UDP-MurNAc-pentapeptide onto the lipid carrier undecaprenyl phosphate, yielding undecaprenyl-pyrophosphoryl-MurNAc-pentapeptide, known as lipid I. This Pseudomonas entomophila (strain L48) protein is Phospho-N-acetylmuramoyl-pentapeptide-transferase.